The following is a 148-amino-acid chain: Probable transporter PD_1893 (148 aa).

Helical transmembrane passes span 11 to 31, 48 to 68, 93 to 113, and 118 to 138; these read FTVA…SEMI, NPSL…GMAL, IVFG…CPGP, and LSTG…GMII.

It belongs to the TsuA/YedE (TC 9.B.102) family.

It is found in the cell inner membrane. This is Probable transporter PD_1893 from Xylella fastidiosa (strain Temecula1 / ATCC 700964).